The chain runs to 637 residues: MGKKIRLTTAQALIKFLNQQYIHVDGKEEPFVEGIFTIFGHGNVLGIGQALEQDAGHLKVYQGKNEQGMAHAAMAYSKQMLRRKIYAVSTSVGPGAANLVAAAGTALANNIPVLLIPADTFATRQPDPVLQQMEQEYSAAITTNDALKPVSRYWDRITRPEQLMSSLLRAFEVMTDPAKAGPATICISQDVEGEAYDFDESFFVKRVHYIDRMQPSERELQGAAELIKSSKKPVILVGGGAKYSGARDELVAISEAYNIPLVETQAGKSTVEADFANNLGGMGITGTLAANKAARQADLIIGIGTRYTDFATSSKTAFDFDKAKFLNINVSRMQAYKLDAFQVVADAKVTLGKLHGLLEGYESEFGTTIRELKDEWLAERERLSKVTFKREAFDPEIKNHFSQEVLNEYADALNTELPQTTALLTINETIPEDSVIICSAGSLPGDLQRLWHSNVPNTYHLEYGYSCMGYEVSGTLGLKLAHPDREVYSIVGDGSFLMLHSELITAIQYNKKINVLLFDNSGFGCINNLQMDHGSGSYYCEFRTDDNQILNVDYAKVAEGYGAKTYRANTVEELKAALEDAKKQDVSTLIEMKVLPKTMTDGYDSWWHVGVAEVSEQESVQKAYEAKEKKLESAKQY.

Glu66 is a binding site for thiamine diphosphate. The interval 442–522 is thiamine pyrophosphate binding; that stretch reads SLPGDLQRLW…INVLLFDNSG (81 aa). Positions 493 and 520 each coordinate Mg(2+).

The protein belongs to the TPP enzyme family. It depends on Mg(2+) as a cofactor. Thiamine diphosphate is required as a cofactor.

It carries out the reaction 3D-3,5/4-trihydroxycyclohexane-1,2-dione + H2O = 5-deoxy-D-glucuronate + H(+). Its pathway is polyol metabolism; myo-inositol degradation into acetyl-CoA; acetyl-CoA from myo-inositol: step 3/7. Functionally, involved in the cleavage of the C1-C2 bond of 3D-(3,5/4)-trihydroxycyclohexane-1,2-dione (THcHDO) to yield 5-deoxy-glucuronate (5DG). In Bacillus subtilis (strain 168), this protein is 3D-(3,5/4)-trihydroxycyclohexane-1,2-dione hydrolase (iolD).